A 299-amino-acid chain; its full sequence is Nicotinate-nucleotide pyrophosphorylase [carboxylating] (299 aa).

Positions Phe-8 to Pro-12 are important for hexamer formation. Quinolinate contacts are provided by residues Arg-102, Arg-138–Lys-139, His-160–Arg-161, Lys-171, Glu-201, Asp-222, Ser-248–Gly-250, and Gly-270.

The protein belongs to the NadC/ModD family. In terms of assembly, hexamer formed by 3 homodimers.

The enzyme catalyses nicotinate beta-D-ribonucleotide + CO2 + diphosphate = quinolinate + 5-phospho-alpha-D-ribose 1-diphosphate + 2 H(+). Its pathway is cofactor biosynthesis; NAD(+) biosynthesis; nicotinate D-ribonucleotide from quinolinate: step 1/1. Its function is as follows. Involved in the catabolism of quinolinic acid (QA). The polypeptide is Nicotinate-nucleotide pyrophosphorylase [carboxylating] (Qprt) (Rattus norvegicus (Rat)).